The sequence spans 505 residues: Dolichyl pyrophosphate Glc1Man9GlcNAc2 alpha-1,3-glucosyltransferase (505 aa).

The Lumenal segment spans residues 1-3 (MAE). The chain crosses the membrane as a helical span at residues 4 to 24 (IYPSLVQCAIVATAFKVLLFP). The Cytoplasmic portion of the chain corresponds to 25–101 (AYKSTDFEVH…DSWQTVYFQR (77 aa)). The helical transmembrane segment at 102-122 (WTVIVTELVLLYALQMFVDST) threads the bilayer. At 123 to 128 (PGVSKR) the chain is on the lumenal side. Residues 129–149 (AAHAAAVSILLSPGLLIIDHI) form a helical membrane-spanning segment. At 150–152 (HFQ) the chain is on the cytoplasmic side. Residues 153–169 (YNGVMYGILIASLVLAK) form a helical membrane-spanning segment. Residues 170–173 (KKSS) lie on the Lumenal side of the membrane. The chain crosses the membrane as a helical span at residues 174-194 (LLASGLVFAALLCMKHIYLYL). The Cytoplasmic segment spans residues 195-224 (APAYFVYLLRVYCLPPKLSPRSIFRIQFFN). A helical transmembrane segment spans residues 225 to 245 (CVKLGGGIAAIFAAAFGPFAL). Topologically, residues 246–319 (KNQIPQIFSR…TSFAVLPDIT (74 aa)) are lumenal. A helical membrane pass occupies residues 320 to 340 (PRMCFVLTLLFQAIPLIKLFM). The Cytoplasmic portion of the chain corresponds to 341–359 (RPTWEGFIGGVTLCGYASF). A helical membrane pass occupies residues 360–380 (LFGWHVHEKAILLVIIPFSLI). The Lumenal segment spans residues 381–386 (ALKDRR). A helical membrane pass occupies residues 387–407 (YLGAFRPLAVAGHVSLFPLIF). At 408-409 (TP) the chain is on the cytoplasmic side. A helical membrane pass occupies residues 410 to 430 (AEFPIKTVYTIFWLVLFLMAF). Residues 431–450 (DRLAPAPTRQRLFLFDRFST) are Lumenal-facing. Residues 451-471 (AYITVSIPLIFYCSLMHGIIF) form a helical membrane-spanning segment. At 472–480 (GKSYEFLPL) the chain is on the cytoplasmic side. A helical transmembrane segment spans residues 481 to 501 (MFTSSYSAIGVVGSWLGFMVV). At 502 to 505 (YFTE) the chain is on the lumenal side.

Belongs to the ALG6/ALG8 glucosyltransferase family.

It is found in the endoplasmic reticulum membrane. The catalysed reaction is an alpha-D-Glc-(1-&gt;3)-alpha-D-Man-(1-&gt;2)-alpha-D-Man-(1-&gt;2)-alpha-D-Man-(1-&gt;3)-[alpha-D-Man-(1-&gt;2)-alpha-D-Man-(1-&gt;3)-[alpha-D-Man-(1-&gt;2)-alpha-D-Man-(1-&gt;6)]-alpha-D-Man-(1-&gt;6)]-beta-D-Man-(1-&gt;4)-beta-D-GlcNAc-(1-&gt;4)-alpha-D-GlcNAc-diphospho-di-trans,poly-cis-dolichol + a di-trans,poly-cis-dolichyl beta-D-glucosyl phosphate = an alpha-D-Glc-(1-&gt;3)-alpha-D-Glc-(1-&gt;3)-alpha-D-Man-(1-&gt;2)-alpha-D-Man-(1-&gt;2)-alpha-D-Man-(1-&gt;3)-[alpha-D-Man-(1-&gt;2)-alpha-D-Man-(1-&gt;3)-[alpha-D-Man-(1-&gt;2)-alpha-D-Man-(1-&gt;6)]-alpha-D-Man-(1-&gt;6)]-beta-D-Man-(1-&gt;4)-beta-D-GlcNAc-(1-&gt;4)-alpha-D-GlcNAc-diphospho-di-trans,poly-cis-dolichol + a di-trans,poly-cis-dolichyl phosphate + H(+). It functions in the pathway protein modification; protein glycosylation. Its function is as follows. Dolichyl pyrophosphate Glc1Man9GlcNAc2 alpha-1,3-glucosyltransferase that operates in the biosynthetic pathway of dolichol-linked oligosaccharides, the glycan precursors employed in protein asparagine (N)-glycosylation. The assembly of dolichol-linked oligosaccharides begins on the cytosolic side of the endoplasmic reticulum membrane and finishes in its lumen. The sequential addition of sugars to dolichol pyrophosphate produces dolichol-linked oligosaccharides containing fourteen sugars, including two GlcNAcs, nine mannoses and three glucoses. Once assembled, the oligosaccharide is transferred from the lipid to nascent proteins by oligosaccharyltransferases. In the lumen of the endoplasmic reticulum, adds the second glucose residue from dolichyl phosphate glucose (Dol-P-Glc) onto the lipid-linked oligosaccharide intermediate Glc(1)Man(9)GlcNAc(2)-PP-Dol to produce Glc(2)Man(9)GlcNAc(2)-PP-Dol. In Neurospora crassa (strain ATCC 24698 / 74-OR23-1A / CBS 708.71 / DSM 1257 / FGSC 987), this protein is Dolichyl pyrophosphate Glc1Man9GlcNAc2 alpha-1,3-glucosyltransferase (alg-8).